Here is a 78-residue protein sequence, read N- to C-terminus: Putative protein PeaD (78 aa).

This sequence belongs to the phage P protein family.

The chain is Putative protein PeaD (peaD) from Escherichia coli (strain K12).